Reading from the N-terminus, the 537-residue chain is Probable glucomannan 4-beta-mannosyltransferase 15 (537 aa).

Residues 50 to 70 traverse the membrane as a helical segment; that stretch reads FIVPLFKCIVVMCLIISLLVF. Residue Asp-150 is part of the active site. Positions 209 and 211 each coordinate substrate. Asp-303 is an active-site residue. A run of 4 helical transmembrane segments spans residues 382–402, 418–438, 494–514, and 515–535; these read IVVH…SVFL, VITL…IFWV, EMMM…FGNA, and FLYL…VGFV.

This sequence belongs to the glycosyltransferase 2 family. Plant cellulose synthase-like A subfamily.

Its subcellular location is the golgi apparatus membrane. The enzyme catalyses GDP-mannose + (glucomannan)n = GDP + (glucomannan)n+1.. In terms of biological role, probable mannan synthase which consists of a 4-beta-mannosyltransferase activity on mannan using GDP-mannose. The beta-1,4-mannan product is the backbone for galactomannan synthesis by galactomannan galactosyltransferase. Galactomannan is a noncellulosic polysaccharides of plant cell wall. The sequence is that of Probable glucomannan 4-beta-mannosyltransferase 15 from Arabidopsis thaliana (Mouse-ear cress).